Here is a 534-residue protein sequence, read N- to C-terminus: Serine protease vicPa (534 aa).

An N-terminal signal peptide occupies residues 1–17 (MLCYLLIHILCLQAVLG). Residues Asn-65 and Asn-126 are each glycosylated (N-linked (GlcNAc...) asparagine). Ser-174 functions as the Charge relay system in the catalytic mechanism. N-linked (GlcNAc...) asparagine glycosylation is found at Asn-297, Asn-416, and Asn-436. The active-site Charge relay system is the Asp-450.

Belongs to the peptidase S28 family.

The protein operates within mycotoxin biosynthesis. Serine protease, part of the gene cluster that mediates the biosynthesis of the secondary metabolite victorin, the molecular basis for Victoria blight of oats. Within the pathway, vicPa and vicPb are probably involved in the processing of the vicA1 and vicA2 precursors. The pathway starts with the processing of the precursor vicA1 by several endopeptidases including kexin proteases as well as the cluster-specific S28 family peptidases vicPa and vicPb to produce 7 identical copies of the hexapeptide Gly-Leu-Lys-Leu-Ala-Phe. After being excised from the precursor peptide, the core peptides are cyclized and modified post-translationally by enzymes encoded within the gene cluster. The ustYa family oxidase vicYb is required for the formation of the macrocycle in victorin and the copper amine oxidases (CAOs) vicK1 and vicK2 are responsible for converting victorin to the active form by oxidizing the N-terminal glycyl residue in the peptides to glyoxylate. Relaxed substrate specificity of enzymes in the victorin biosynthetic pathway results in a metabolic grid that produces a set of analogs including victorinines B, C, E or HV-toxin M. The chain is Serine protease vicPa from Bipolaris victoriae (strain FI3) (Victoria blight of oats agent).